A 261-amino-acid polypeptide reads, in one-letter code: MAATAREDGVRNLAQGPRGCEHYDRACLLKAPCCDKLYTCRLCHDTNEDHQLDRFKVKEVQCINCEKLQHAQQTCEDCSTLFGEYYCSICHLFDKDKRQYHCESCGICRIGPKEDFFHCLKCNLCLTTNLRGKHKCIENVSRQNCPICLEDIHTSRVVAHVLPCGHLLHRTCYEEMLKEGYRCPLCMHSALDMTRYWRQLDTEVAQTPMPSEYQNVTVDILCNDCNGRSTVQFHILGMKCKLCDSYNTAQAGGRRVPVDQQ.

The CHY-type zinc-finger motif lies at 13–80; sequence LAQGPRGCEH…AQQTCEDCST (68 aa). Zn(2+)-binding residues include Cys20, His22, Cys33, Cys34, Cys40, Cys43, His44, His50, Cys62, Cys65, Cys75, Cys78, Cys87, Cys90, His101, Cys102, Cys105, Cys108, His118, Cys119, Cys122, Cys125, His134, and Cys136. The segment at 82 to 144 adopts a CTCHY-type zinc-finger fold; sequence FGEYYCSICH…KCIENVSRQN (63 aa). The segment at 145-189 adopts an RING-type zinc-finger fold; it reads CPICLEDIHTSRVVAHVLPCGHLLHRTCYEEMLKEGYRCPLCMHS.

In terms of assembly, monomer and homodimer. Interacts with AR, MDM2, KAT5, PLAG1, PLAGL2, COPE, UBE2D2 and GORAB/NTKLBP1. Post-translationally, subject to ubiquitination and proteasomal degradation. Interaction with PLAGL2 or KAT5 enhances protein stability. In terms of tissue distribution, detected in testis, liver, kidney and heart.

Its subcellular location is the nucleus. It localises to the nucleus speckle. The protein localises to the cytoplasm. It carries out the reaction S-ubiquitinyl-[E2 ubiquitin-conjugating enzyme]-L-cysteine + [acceptor protein]-L-lysine = [E2 ubiquitin-conjugating enzyme]-L-cysteine + N(6)-ubiquitinyl-[acceptor protein]-L-lysine.. It functions in the pathway protein modification; protein ubiquitination. E3 ubiquitin-protein ligase that mediates ubiquitination of target proteins, including p53/TP53, TP73, HDAC1 and CDKN1B. Mediates ubiquitination and degradation of p53/TP53; preferentially acts on tetrameric p53/TP53. Catalyzes monoubiquitinates the translesion DNA polymerase POLH. Involved in the ribosome-associated quality control (RQC) pathway, which mediates the extraction of incompletely synthesized nascent chains from stalled ribosomes: RCHY1 acts downstream of NEMF and recognizes CAT tails associated with stalled nascent chains, leading to their ubiquitination and degradation. The chain is RING finger and CHY zinc finger domain-containing protein 1 (Rchy1) from Mus musculus (Mouse).